Consider the following 302-residue polypeptide: Recombination-associated protein RdgC (302 aa).

It belongs to the RdgC family.

It localises to the cytoplasm. The protein localises to the nucleoid. In terms of biological role, may be involved in recombination. This Xylella fastidiosa (strain M23) protein is Recombination-associated protein RdgC.